A 252-amino-acid polypeptide reads, in one-letter code: 3-dehydroquinate dehydratase (252 aa).

3-dehydroquinate is bound by residues S21, 46–48 (EWR), and R82. The Proton donor/acceptor role is filled by H143. K170 serves as the catalytic Schiff-base intermediate with substrate. Residues R213, S232, and Q236 each coordinate 3-dehydroquinate.

The protein belongs to the type-I 3-dehydroquinase family. In terms of assembly, homodimer.

The catalysed reaction is 3-dehydroquinate = 3-dehydroshikimate + H2O. It functions in the pathway metabolic intermediate biosynthesis; chorismate biosynthesis; chorismate from D-erythrose 4-phosphate and phosphoenolpyruvate: step 3/7. Involved in the third step of the chorismate pathway, which leads to the biosynthesis of aromatic amino acids. Catalyzes the cis-dehydration of 3-dehydroquinate (DHQ) and introduces the first double bond of the aromatic ring to yield 3-dehydroshikimate. This chain is 3-dehydroquinate dehydratase, found in Escherichia coli O157:H7.